The primary structure comprises 216 residues: Adenylate kinase (216 aa).

Position 10 to 15 (10 to 15 (GSGKGT)) interacts with ATP. The NMP stretch occupies residues 30–59 (STGDMLRAAVKEGTPMGVKAKAKMDAGALV). AMP is bound by residues Thr-31, Arg-36, 57 to 59 (ALV), 85 to 88 (GFPR), and Gln-92. Positions 126-163 (GRRTCRDCGKMYHVEFDAPAVADKCDKCGGQLFQRDDD) are LID. An ATP-binding site is contributed by Arg-127. Zn(2+) contacts are provided by Cys-130, Cys-133, Cys-150, and Cys-153. AMP is bound by residues Arg-160 and Arg-171. Lys-199 contributes to the ATP binding site.

It belongs to the adenylate kinase family. In terms of assembly, monomer.

Its subcellular location is the cytoplasm. It catalyses the reaction AMP + ATP = 2 ADP. Its pathway is purine metabolism; AMP biosynthesis via salvage pathway; AMP from ADP: step 1/1. Catalyzes the reversible transfer of the terminal phosphate group between ATP and AMP. Plays an important role in cellular energy homeostasis and in adenine nucleotide metabolism. The protein is Adenylate kinase of Syntrophotalea carbinolica (strain DSM 2380 / NBRC 103641 / GraBd1) (Pelobacter carbinolicus).